Here is a 313-residue protein sequence, read N- to C-terminus: Ribonuclease HIII (313 aa).

In terms of domain architecture, RNase H type-2 spans 98–313; sequence YNCIGSDEAG…REKALKLIKK (216 aa). Residues D104, E105, and D208 each coordinate a divalent metal cation.

This sequence belongs to the RNase HII family. RnhC subfamily. Mn(2+) is required as a cofactor. The cofactor is Mg(2+).

It is found in the cytoplasm. It carries out the reaction Endonucleolytic cleavage to 5'-phosphomonoester.. Endonuclease that specifically degrades the RNA of RNA-DNA hybrids. The polypeptide is Ribonuclease HIII (Macrococcus caseolyticus (strain JCSC5402) (Macrococcoides caseolyticum)).